A 150-amino-acid chain; its full sequence is Mediator of RNA polymerase II transcription subunit 22a (150 aa).

Residues S99–D127 adopt a coiled-coil conformation.

This sequence belongs to the Mediator complex subunit 22 family. Component of the Mediator complex.

The protein localises to the nucleus. In terms of biological role, component of the Mediator complex, a coactivator involved in the regulated transcription of nearly all RNA polymerase II-dependent genes. Mediator functions as a bridge to convey information from gene-specific regulatory proteins to the basal RNA polymerase II transcription machinery. The Mediator complex, having a compact conformation in its free form, is recruited to promoters by direct interactions with regulatory proteins and serves for the assembly of a functional preinitiation complex with RNA polymerase II and the general transcription factors. The protein is Mediator of RNA polymerase II transcription subunit 22a (MED22A) of Arabidopsis thaliana (Mouse-ear cress).